We begin with the raw amino-acid sequence, 1077 residues long: Ubiquitin-activating enzyme E1 2 (1077 aa).

The disordered stretch occupies residues 16–36; that stretch reads SPMKKRRIDHTESADGSAINA. Residues A499, D525, R536, K549, and 597-598 each bind ATP; that span reads DN. C653 acts as the Glycyl thioester intermediate in catalysis.

Belongs to the ubiquitin-activating E1 family. Monomer. Expressed in leaves, flowers, roots and stems. Detected in germinating seeds, cotyledons, hypocotyls, vascular tissues, anthers, filaments, pollen, style, stigma, sepals, petals, ovary, developing ovules, funiculi and silique walls.

The catalysed reaction is ATP + ubiquitin + [E1 ubiquitin-activating enzyme]-L-cysteine = AMP + diphosphate + S-ubiquitinyl-[E1 ubiquitin-activating enzyme]-L-cysteine.. It functions in the pathway protein modification; protein ubiquitination. In terms of biological role, activates ubiquitin by first adenylating its C-terminal glycine residue with ATP, and thereafter linking this residue to the side chain of a cysteine residue in E1, yielding a ubiquitin-E1 thioester and free AMP. The polypeptide is Ubiquitin-activating enzyme E1 2 (UBA2) (Arabidopsis thaliana (Mouse-ear cress)).